Here is a 409-residue protein sequence, read N- to C-terminus: Casein kinase I isoform delta-B (409 aa).

The region spanning 9 to 277 is the Protein kinase domain; the sequence is YRLGRKIGSG…YLRQLFRNLF (269 aa). ATP-binding positions include 15 to 23 and Lys-38; that span reads IGSGSFGDI. Residue Asp-128 is the Proton acceptor of the active site. The span at 300-315 shows a compositional bias: basic and acidic residues; sequence TAEEADRERRERDERM. The interval 300–409 is disordered; it reads TAEEADRERR…NSIPFDHHGK (110 aa). The autoinhibitory stretch occupies residues 317–341; the sequence is HSRNPAARGIPAASGRPRPTQDGAP. Polar residues-rich tracts occupy residues 346 to 358 and 380 to 402; these read TPTS…SSPR and NVSS…QNSI.

It belongs to the protein kinase superfamily. In terms of assembly, monomer. Interacts with per1 and per2. Component of the circadian core oscillator. Post-translationally, autophosphorylated on serine and threonine residues.

It is found in the cytoplasm. Its subcellular location is the nucleus. The catalysed reaction is L-seryl-[protein] + ATP = O-phospho-L-seryl-[protein] + ADP + H(+). It carries out the reaction L-threonyl-[protein] + ATP = O-phospho-L-threonyl-[protein] + ADP + H(+). Its activity is regulated as follows. Exhibits substrate-dependent heparin activation. In terms of biological role, casein kinases are operationally defined by their preferential utilization of acidic proteins such as caseins as substrates. Central component of the circadian clock. May act as a negative regulator of circadian rhythmicity by phosphorylating per1 and per2, which may lead to their degradation. Participates in wnt signaling. The protein is Casein kinase I isoform delta-B (csnk1db) of Danio rerio (Zebrafish).